A 201-amino-acid chain; its full sequence is Putative toxin HigB2 (201 aa).

The protein belongs to the mycobacterial HigB family.

Its function is as follows. Putative toxic component of a type II toxin-antitoxin (TA) system. Its cognate antitoxin would be HigA2. This Mycobacterium tuberculosis (strain ATCC 25618 / H37Rv) protein is Putative toxin HigB2.